We begin with the raw amino-acid sequence, 335 residues long: Glycerol-3-phosphate dehydrogenase [NAD(P)+] (335 aa).

NADPH is bound by residues Ser15, Tyr16, His36, and Lys110. Sn-glycerol 3-phosphate is bound by residues Lys110, Gly139, and Thr141. Residue Ala143 participates in NADPH binding. Lys195, Asp248, Ser258, Arg259, and Asn260 together coordinate sn-glycerol 3-phosphate. The active-site Proton acceptor is the Lys195. An NADPH-binding site is contributed by Arg259. Residues Val283 and Glu285 each contribute to the NADPH site.

It belongs to the NAD-dependent glycerol-3-phosphate dehydrogenase family.

It localises to the cytoplasm. It catalyses the reaction sn-glycerol 3-phosphate + NAD(+) = dihydroxyacetone phosphate + NADH + H(+). The enzyme catalyses sn-glycerol 3-phosphate + NADP(+) = dihydroxyacetone phosphate + NADPH + H(+). It participates in membrane lipid metabolism; glycerophospholipid metabolism. Catalyzes the reduction of the glycolytic intermediate dihydroxyacetone phosphate (DHAP) to sn-glycerol 3-phosphate (G3P), the key precursor for phospholipid synthesis. The sequence is that of Glycerol-3-phosphate dehydrogenase [NAD(P)+] from Mannheimia succiniciproducens (strain KCTC 0769BP / MBEL55E).